Here is a 247-residue protein sequence, read N- to C-terminus: MAAVTAALVKELRERTGLGMMECKKALVEAEGDIERAIDDLRKSGQAKAAKKAGRTAAEGAIAVAVSGDGKTAIMVEINSETDFVARDDNFLGFANKVAEAALAAAKTEAADIAGVELADGSTVEQAREALIQKIGENIQVRRAAILSAESALGAYVHGGKIGVLVALKGGDEALGRDVAMHVAAVAPQVVNPSEVPESDLEREKEIIRAQPDMAGKPAEIVEKMLGGRIQKFLKEISLVEQPFVKD.

The tract at residues 82-85 is involved in Mg(2+) ion dislocation from EF-Tu; it reads TDFV.

This sequence belongs to the EF-Ts family.

The protein resides in the cytoplasm. Associates with the EF-Tu.GDP complex and induces the exchange of GDP to GTP. It remains bound to the aminoacyl-tRNA.EF-Tu.GTP complex up to the GTP hydrolysis stage on the ribosome. The polypeptide is Elongation factor Ts (tsf) (Arthrospira platensis (Spirulina platensis)).